A 230-amino-acid chain; its full sequence is Ribosomal RNA small subunit methyltransferase I (230 aa).

The protein belongs to the methyltransferase superfamily. RsmI family.

It localises to the cytoplasm. It catalyses the reaction cytidine(1402) in 16S rRNA + S-adenosyl-L-methionine = 2'-O-methylcytidine(1402) in 16S rRNA + S-adenosyl-L-homocysteine + H(+). Catalyzes the 2'-O-methylation of the ribose of cytidine 1402 (C1402) in 16S rRNA. The sequence is that of Ribosomal RNA small subunit methyltransferase I from Hydrogenobaculum sp. (strain Y04AAS1).